A 149-amino-acid chain; its full sequence is 3-dehydroquinate dehydratase (149 aa).

Y22 serves as the catalytic Proton acceptor. The substrate site is built by N73, H79, and D86. H99 (proton donor) is an active-site residue. Substrate contacts are provided by residues 100 to 101 (LS) and R110.

Belongs to the type-II 3-dehydroquinase family. In terms of assembly, homododecamer.

The catalysed reaction is 3-dehydroquinate = 3-dehydroshikimate + H2O. It participates in metabolic intermediate biosynthesis; chorismate biosynthesis; chorismate from D-erythrose 4-phosphate and phosphoenolpyruvate: step 3/7. Catalyzes a trans-dehydration via an enolate intermediate. The chain is 3-dehydroquinate dehydratase from Prochlorococcus marinus (strain SARG / CCMP1375 / SS120).